The chain runs to 354 residues: Galactose-1-phosphate uridylyltransferase (354 aa).

A disordered region spans residues 36 to 72 (TVTTSEVRRDPLLGDSAPSRLAPQGRTYHPPADQCPL). Cys-70, Cys-73, and His-114 together coordinate Zn(2+). Asn-154 is a UDP-alpha-D-glucose binding site. His-165 lines the Zn(2+) pocket. Catalysis depends on His-167, which acts as the Tele-UMP-histidine intermediate. The UDP-alpha-D-glucose site is built by Gln-169 and Gln-332.

This sequence belongs to the galactose-1-phosphate uridylyltransferase type 1 family. Requires Zn(2+) as cofactor.

The catalysed reaction is alpha-D-galactose 1-phosphate + UDP-alpha-D-glucose = alpha-D-glucose 1-phosphate + UDP-alpha-D-galactose. It participates in carbohydrate metabolism; galactose metabolism. The sequence is that of Galactose-1-phosphate uridylyltransferase (galT) from Streptomyces lividans.